Here is a 132-residue protein sequence, read N- to C-terminus: Small ribosomal subunit protein uS8 (132 aa).

It belongs to the universal ribosomal protein uS8 family. Part of the 30S ribosomal subunit. Contacts proteins S5 and S12.

In terms of biological role, one of the primary rRNA binding proteins, it binds directly to 16S rRNA central domain where it helps coordinate assembly of the platform of the 30S subunit. The protein is Small ribosomal subunit protein uS8 of Streptococcus agalactiae serotype V (strain ATCC BAA-611 / 2603 V/R).